The primary structure comprises 289 residues: MRPTPTLAEFLHAPLTTIRQVAPATMVFSSGGSRRKAALANMSAAGEEYARWSHQQLLKCLELFFSHGIKHLFLPMLLPNQFQETTPNYREHIEQWVAWGAASQTMLEYYQEHNWRVRLLDTQYSPILADAAQRLQQPYDHPDQPTLWWFVVRDSEDPWQIIFQAAQKTVFKTRSQAIEAIYGEPIPPAELFVSFGKPQVNHDLLPPLLVGELQCYWTQKPGYTLSEEEFRQILYDFAFLRKTWQVDKTERTQAALAFRQHWERGPILGLGQQLGPFWYPQSTSIESEL.

The protein belongs to the diterpene synthase family.

The catalysed reaction is (+)-kolavenyl diphosphate + H2O = (+)-kolavelool + diphosphate. In terms of biological role, involved in the biosynthesis of (+)-O-methylkolavelool. Catalyzes the biosynthesis of (+)-kolavelool from (+)-kolavenyl diphosphate via the release of the diphosphate moiety through the nucleophilic addition of a water molecule. This chain is (+)-kolavelool synthase, found in Herpetosiphon aurantiacus (strain ATCC 23779 / DSM 785 / 114-95).